Reading from the N-terminus, the 69-residue chain is DNA gyrase inhibitor YacG (69 aa).

A disordered region spans residues 1–28 (MSGEGKKHGSNVEPLRPTRPCPECGRPS). Zn(2+)-binding residues include Cys21, Cys24, Cys36, and Cys40.

The protein belongs to the DNA gyrase inhibitor YacG family. In terms of assembly, interacts with GyrB. Zn(2+) serves as cofactor.

Functionally, inhibits all the catalytic activities of DNA gyrase by preventing its interaction with DNA. Acts by binding directly to the C-terminal domain of GyrB, which probably disrupts DNA binding by the gyrase. This Sinorhizobium fredii (strain NBRC 101917 / NGR234) protein is DNA gyrase inhibitor YacG.